Consider the following 275-residue polypeptide: Probable aquaporin NIP7-1 (275 aa).

The segment covering 1–11 has biased composition (basic and acidic residues); that stretch reads MNGEARSRVVD. The segment at 1–26 is disordered; that stretch reads MNGEARSRVVDQEAGSTPSTLRDEDH. The next 2 helical transmembrane spans lie at 47–67 and 76–96; these read IVMAELVGTFILMFSVCGVIS and VGLLEYAVTAGLSVVVVVYSI. Residues 105 to 107 carry the NPA 1 motif; sequence NPS. The next 3 helical transmembrane spans lie at 127 to 147, 161 to 181, and 192 to 212; these read ITAQTLGATAATLVGVSVYGV, VSAFFVELIATSIVVFLASAL, and LTGFVIGTVISLGVLITGPIS. The NPA 2 motif lies at 217–219; that stretch reads NPA. Residues 231 to 251 form a helical membrane-spanning segment; the sequence is FEDLWIYMTAPVIGAIIGVLT. Ser-272 carries the phosphoserine modification.

The protein belongs to the MIP/aquaporin (TC 1.A.8) family. NIP (TC 1.A.8.12) subfamily. In terms of tissue distribution, expressed in floral buds.

The protein localises to the membrane. Functionally, aquaporins facilitate the transport of water and small neutral solutes across cell membranes. The chain is Probable aquaporin NIP7-1 (NIP7-1) from Arabidopsis thaliana (Mouse-ear cress).